Here is a 292-residue protein sequence, read N- to C-terminus: Cyclin-dependent kinase 5 (292 aa).

Residues 4 to 286 (YEKLEKIGEG…AEEALQHPYF (283 aa)) enclose the Protein kinase domain. ATP contacts are provided by residues 10-18 (IGEGTYGTV) and K33. Y15 is subject to Phosphotyrosine; by ABL1, EPHA4 and FYN. Phosphothreonine is present on T17. K56 carries the N6-acetyllysine modification. At S72 the chain carries Phosphoserine. D126 serves as the catalytic Proton acceptor. The residue at position 159 (S159) is a Phosphoserine.

Belongs to the protein kinase superfamily. CMGC Ser/Thr protein kinase family. CDC2/CDKX subfamily. In terms of assembly, heterodimer composed of a catalytic subunit CDK5 and a regulatory subunit CDK5R1 (p25) and macromolecular complex composed of at least CDK5, CDK5R1 (p35) and CDK5RAP1 or CDK5RAP2 or CDK5RAP3. Only the heterodimer shows kinase activity. Under neurotoxic stress and neuronal injury conditions, p35 is cleaved by calpain to generate p25 that hyperactivates CDK5, that becomes functionally disabled and often toxic. Found in a trimolecular complex with CABLES1 and ABL1. Interacts with CABLES1 and CABLES2. Interacts with AATK and GSTP1. Binds to HDAC1 when in complex with p25. Interaction with myristoylation p35 promotes CDK5 association with membranes. Both isoforms 1 and 2 interacts with beta-catenin/CTNNB1. Interacts with delta-catenin/CTNND2 and APEX1. Interacts with P53/TP53 in neurons. Interacts with PTK2/FAK1. Interacts with EPHA4; may mediate the activation of NGEF by EPHA4. The complex p35/CDK5 interacts with CLOCK. Interacts with HTR6. In terms of processing, phosphorylation on Tyr-15 by ABL1 and FYN, and on Ser-159 by casein kinase 1 promotes kinase activity. By contrast, phosphorylation at Thr-14 inhibits activity. Phosphorylation at Ser-159 is essential for maximal catalytic activity. As to expression, expressed in hippocampal neuronal synaptic termini (at protein level). Expressed predominantly in post-mitotic neurons of the central and peripheral nervous system.

It is found in the cytoplasm. The protein localises to the nucleus. It localises to the cell membrane. The protein resides in the perikaryon. Its subcellular location is the cell projection. It is found in the lamellipodium. The protein localises to the growth cone. It localises to the postsynaptic density. The protein resides in the synapse. The catalysed reaction is L-seryl-[protein] + ATP = O-phospho-L-seryl-[protein] + ADP + H(+). The enzyme catalyses L-threonyl-[protein] + ATP = O-phospho-L-threonyl-[protein] + ADP + H(+). With respect to regulation, inhibited by 2-(1-ethyl-2-hydroxyethylamino)-6-benzylamino-9-isopropylpurine (roscovitine), 1-isopropyl-4-aminobenzyl-6-ether-linked benzimidazoles, resveratrol, AT-7519 and olomoucine. Activated by CDK5R1 (p35) and CDK5R2 (p39) during the development of the nervous system; degradation of CDK5R1 (p35) and CDK5R2 (p39) by proteasome result in down regulation of kinase activity, during this process, CDK5 phosphorylates p35 and induces its ubiquitination and subsequent degradation. Kinase activity is mainly determined by the amount of p35 available and subcellular location; reversible association to plasma membrane inhibits activity. Long-term inactivation as well as CDK5R1 (p25)-mediated hyperactivation of CDK5 triggers cell death. The pro-death activity of hyperactivated CDK5 is suppressed by membrane association of CDK5, via myristoylation of p35. Brain-derived neurotrophic factor, glial-derived neurotrophic factor, nerve growth factor (NGF), retinoic acid, laminin and neuregulin promote activity. Neurotoxicity enhances nuclear activity, thus leading to MEF2 phosphorylation and inhibition prior to apoptosis of cortical neurons. Repression by GSTP1 via p25/p35 translocation prevents neurodegeneration. In terms of biological role, proline-directed serine/threonine-protein kinase essential for neuronal cell cycle arrest and differentiation and may be involved in apoptotic cell death in neuronal diseases by triggering abortive cell cycle re-entry. Interacts with D1 and D3-type G1 cyclins. Phosphorylates SRC, NOS3, VIM/vimentin, p35/CDK5R1, MEF2A, SIPA1L1, SH3GLB1, PXN, PAK1, MCAM/MUC18, SEPT5, SYN1, DNM1, AMPH, SYNJ1, CDK16, RAC1, RHOA, CDC42, TONEBP/NFAT5, MAPT/TAU, MAP1B, histone H1, p53/TP53, HDAC1, APEX1, PTK2/FAK1, huntingtin/HTT, ATM, MAP2, NEFH and NEFM. Regulates several neuronal development and physiological processes including neuronal survival, migration and differentiation, axonal and neurite growth, synaptogenesis, oligodendrocyte differentiation, synaptic plasticity and neurotransmission, by phosphorylating key proteins. Negatively regulates the CACNA1B/CAV2.2 -mediated Ca(2+) release probability at hippocampal neuronal soma and synaptic terminals. Activated by interaction with CDK5R1 (p35) and CDK5R2 (p39), especially in postmitotic neurons, and promotes CDK5R1 (p35) expression in an autostimulation loop. Phosphorylates many downstream substrates such as Rho and Ras family small GTPases (e.g. PAK1, RAC1, RHOA, CDC42) or microtubule-binding proteins (e.g. MAPT/TAU, MAP2, MAP1B), and modulates actin dynamics to regulate neurite growth and/or spine morphogenesis. Also phosphorylates exocytosis associated proteins such as MCAM/MUC18, SEPT5, SYN1, and CDK16/PCTAIRE1 as well as endocytosis associated proteins such as DNM1, AMPH and SYNJ1 at synaptic terminals. In the mature central nervous system (CNS), regulates neurotransmitter movements by phosphorylating substrates associated with neurotransmitter release and synapse plasticity; synaptic vesicle exocytosis, vesicles fusion with the presynaptic membrane, and endocytosis. Promotes cell survival by activating anti-apoptotic proteins BCL2 and STAT3, and negatively regulating of JNK3/MAPK10 activity. Phosphorylation of p53/TP53 in response to genotoxic and oxidative stresses enhances its stabilization by preventing ubiquitin ligase-mediated proteasomal degradation, and induces transactivation of p53/TP53 target genes, thus regulating apoptosis. Phosphorylation of p35/CDK5R1 enhances its stabilization by preventing calpain-mediated proteolysis producing p25/CDK5R1 and avoiding ubiquitin ligase-mediated proteasomal degradation. During aberrant cell-cycle activity and DNA damage, p25/CDK5 activity elicits cell-cycle activity and double-strand DNA breaks that precedes neuronal death by deregulating HDAC1. DNA damage triggered phosphorylation of huntingtin/HTT in nuclei of neurons protects neurons against polyglutamine expansion as well as DNA damage mediated toxicity. Phosphorylation of PXN reduces its interaction with PTK2/FAK1 in matrix-cell focal adhesions (MCFA) during oligodendrocytes (OLs) differentiation. Negative regulator of Wnt/beta-catenin signaling pathway. Activator of the GAIT (IFN-gamma-activated inhibitor of translation) pathway, which suppresses expression of a post-transcriptional regulon of proinflammatory genes in myeloid cells; phosphorylates the linker domain of glutamyl-prolyl tRNA synthetase (EPRS) in a IFN-gamma-dependent manner, the initial event in assembly of the GAIT complex. Phosphorylation of SH3GLB1 is required for autophagy induction in starved neurons. Phosphorylation of TONEBP/NFAT5 in response to osmotic stress mediates its rapid nuclear localization. MEF2 is inactivated by phosphorylation in nucleus in response to neurotoxin, thus leading to neuronal apoptosis. APEX1 AP-endodeoxyribonuclease is repressed by phosphorylation, resulting in accumulation of DNA damage and contributing to neuronal death. NOS3 phosphorylation down regulates NOS3-derived nitrite (NO) levels. SRC phosphorylation mediates its ubiquitin-dependent degradation and thus leads to cytoskeletal reorganization. May regulate endothelial cell migration and angiogenesis via the modulation of lamellipodia formation. Involved in dendritic spine morphogenesis by mediating the EFNA1-EPHA4 signaling. The complex p35/CDK5 participates in the regulation of the circadian clock by modulating the function of CLOCK protein: phosphorylates CLOCK at 'Thr-451' and 'Thr-461' and regulates the transcriptional activity of the CLOCK-BMAL1 heterodimer in association with altered stability and subcellular distribution. This Rattus norvegicus (Rat) protein is Cyclin-dependent kinase 5.